The following is a 518-amino-acid chain: MAIKAEEISALIKEQIENYQNVLSVEEIGTVTYVGDGIARAHGLENAMSGELLEFSNGSYGMAQNLESNDVGIIILGDFESIREGDKVKRTGKIMEVPVGDALIGRVVNPLGQPIDGLGEIVTDKVRPVEAMAPGVMQRKSVNEPMQTGLKAIDALVPIGRGQRELVIGDRKTGKTSIAIDTILNQKGQDMICIYVAIGQKDSTVRTQVETLKKYGAMDYTIVVNAGASQPAPLLYIAPYAGTAMGEEFMYNGKHVLIIFDDLSKQAVAYRELSLLLRRPPGREAYPGDVFYLHSRLLERAAKLSDDLGGGSMTALPFVETQAGDISAYIPTNVISITDGQIFLESDLFYAGTRPAVDAGLSVSRVGGSAQIKAMKKVAGTLRLDLASYRELEAFTQFGSDLDAATQAKLNRGRRTVEILKQKLHAPLAVEKQVVILYALTHGFLDSIPVDSILDFEHELFEYLDTNHADIFETIRTTKDLPEEERLNQAIQEYKDIFLATKGNTSSTEDKLKSIQNA.

Position 169–176 (169–176 (GDRKTGKT)) interacts with ATP.

The protein belongs to the ATPase alpha/beta chains family. In terms of assembly, F-type ATPases have 2 components, CF(1) - the catalytic core - and CF(0) - the membrane proton channel. CF(1) has five subunits: alpha(3), beta(3), gamma(1), delta(1), epsilon(1). CF(0) has three main subunits: a(1), b(2) and c(9-12). The alpha and beta chains form an alternating ring which encloses part of the gamma chain. CF(1) is attached to CF(0) by a central stalk formed by the gamma and epsilon chains, while a peripheral stalk is formed by the delta and b chains.

Its subcellular location is the cell membrane. It carries out the reaction ATP + H2O + 4 H(+)(in) = ADP + phosphate + 5 H(+)(out). Its function is as follows. Produces ATP from ADP in the presence of a proton gradient across the membrane. The alpha chain is a regulatory subunit. In Enterococcus hirae (strain ATCC 9790 / DSM 20160 / JCM 8729 / LMG 6399 / NBRC 3181 / NCIMB 6459 / NCDO 1258 / NCTC 12367 / WDCM 00089 / R), this protein is ATP synthase subunit alpha.